The following is a 66-amino-acid chain: Large ribosomal subunit protein bL31 (66 aa).

4 residues coordinate Zn(2+): Cys16, Cys18, Cys36, and Cys39.

This sequence belongs to the bacterial ribosomal protein bL31 family. Type A subfamily. Part of the 50S ribosomal subunit. The cofactor is Zn(2+).

Functionally, binds the 23S rRNA. This is Large ribosomal subunit protein bL31 from Nautilia profundicola (strain ATCC BAA-1463 / DSM 18972 / AmH).